An 83-amino-acid chain; its full sequence is ATP synthase subunit c (83 aa).

The next 2 helical transmembrane spans lie at 10–30 (IAVALLIGMGALGTAIGFGLL) and 52–72 (MFIVAGLLDAVTMIGVGIALY).

The protein belongs to the ATPase C chain family. As to quaternary structure, F-type ATPases have 2 components, F(1) - the catalytic core - and F(0) - the membrane proton channel. F(1) has five subunits: alpha(3), beta(3), gamma(1), delta(1), epsilon(1). F(0) has three main subunits: a(1), b(2) and c(10-14). The alpha and beta chains form an alternating ring which encloses part of the gamma chain. F(1) is attached to F(0) by a central stalk formed by the gamma and epsilon chains, while a peripheral stalk is formed by the delta and b chains.

It localises to the cell inner membrane. F(1)F(0) ATP synthase produces ATP from ADP in the presence of a proton or sodium gradient. F-type ATPases consist of two structural domains, F(1) containing the extramembraneous catalytic core and F(0) containing the membrane proton channel, linked together by a central stalk and a peripheral stalk. During catalysis, ATP synthesis in the catalytic domain of F(1) is coupled via a rotary mechanism of the central stalk subunits to proton translocation. Its function is as follows. Key component of the F(0) channel; it plays a direct role in translocation across the membrane. A homomeric c-ring of between 10-14 subunits forms the central stalk rotor element with the F(1) delta and epsilon subunits. The chain is ATP synthase subunit c from Shewanella denitrificans (strain OS217 / ATCC BAA-1090 / DSM 15013).